A 596-amino-acid polypeptide reads, in one-letter code: Neuroepithelial cell-transforming gene 1 protein (596 aa).

The residue at position 1 (Met-1) is an N-acetylmethionine. Positions Met-1–Cys-44 are disordered. The tract at residues Met-1–Asp-74 is necessary for nuclear localization. Positions Arg-12–Arg-19 match the Nuclear localization signal motif. Residues Ser-21 and Ser-32 each carry the phosphoserine modification. Polar residues predominate over residues Gly-22–Ser-38. The Nuclear localization signal motif lies at Lys-66 to Lys-72. Ser-100, Ser-106, and Ser-122 each carry phosphoserine. The segment at Gly-127–Thr-146 is disordered. Positions Ala-133–Pro-145 are enriched in polar residues. The region spanning Arg-174–Lys-356 is the DH domain. The PH domain maps to Val-386–Ala-501. Ser-508 carries the post-translational modification Phosphoserine. The tract at residues Met-562 to Val-596 is disordered.

As to quaternary structure, interacts with RHOA in its GTP- and GDP-bound states, and with CDC42 in its GTP-bound state. Interacts with the PDZ 1 domain of BAIAP1. As to expression, widely expressed.

It localises to the cytoplasm. It is found in the nucleus. Functionally, acts as a guanine nucleotide exchange factor (GEF) for RhoA GTPase. May be involved in activation of the SAPK/JNK pathway Stimulates genotoxic stress-induced RHOB activity in breast cancer cells leading to their cell death. The sequence is that of Neuroepithelial cell-transforming gene 1 protein (NET1) from Homo sapiens (Human).